The following is a 486-amino-acid chain: Glutamyl-tRNA(Gln) amidotransferase subunit A (486 aa).

Catalysis depends on charge relay system residues K74 and S149. S173 acts as the Acyl-ester intermediate in catalysis.

This sequence belongs to the amidase family. GatA subfamily. Heterotrimer of A, B and C subunits.

It carries out the reaction L-glutamyl-tRNA(Gln) + L-glutamine + ATP + H2O = L-glutaminyl-tRNA(Gln) + L-glutamate + ADP + phosphate + H(+). Allows the formation of correctly charged Gln-tRNA(Gln) through the transamidation of misacylated Glu-tRNA(Gln) in organisms which lack glutaminyl-tRNA synthetase. The reaction takes place in the presence of glutamine and ATP through an activated gamma-phospho-Glu-tRNA(Gln). This is Glutamyl-tRNA(Gln) amidotransferase subunit A from Prochlorococcus marinus (strain NATL2A).